The primary structure comprises 126 residues: S-adenosylmethionine decarboxylase proenzyme (126 aa).

Catalysis depends on Ser63, which acts as the Schiff-base intermediate with substrate; via pyruvic acid. The residue at position 63 (Ser63) is a Pyruvic acid (Ser); by autocatalysis. His68 (proton acceptor; for processing activity) is an active-site residue. The Proton donor; for catalytic activity role is filled by Cys83.

It belongs to the prokaryotic AdoMetDC family. Type 1 subfamily. As to quaternary structure, heterotetramer of two alpha and two beta chains arranged as a dimer of alpha/beta heterodimers. Pyruvate serves as cofactor. In terms of processing, is synthesized initially as an inactive proenzyme. Formation of the active enzyme involves a self-maturation process in which the active site pyruvoyl group is generated from an internal serine residue via an autocatalytic post-translational modification. Two non-identical subunits are generated from the proenzyme in this reaction, and the pyruvate is formed at the N-terminus of the alpha chain, which is derived from the carboxyl end of the proenzyme. The post-translation cleavage follows an unusual pathway, termed non-hydrolytic serinolysis, in which the side chain hydroxyl group of the serine supplies its oxygen atom to form the C-terminus of the beta chain, while the remainder of the serine residue undergoes an oxidative deamination to produce ammonia and the pyruvoyl group blocking the N-terminus of the alpha chain.

The enzyme catalyses S-adenosyl-L-methionine + H(+) = S-adenosyl 3-(methylsulfanyl)propylamine + CO2. It functions in the pathway amine and polyamine biosynthesis; S-adenosylmethioninamine biosynthesis; S-adenosylmethioninamine from S-adenosyl-L-methionine: step 1/1. Its function is as follows. Catalyzes the decarboxylation of S-adenosylmethionine to S-adenosylmethioninamine (dcAdoMet), the propylamine donor required for the synthesis of the polyamines spermine and spermidine from the diamine putrescine. This Oceanobacillus iheyensis (strain DSM 14371 / CIP 107618 / JCM 11309 / KCTC 3954 / HTE831) protein is S-adenosylmethionine decarboxylase proenzyme.